Here is a 122-residue protein sequence, read N- to C-terminus: Large ribosomal subunit protein uL18 (122 aa).

The span at 1-21 (MSKLSRKQQTQKRHRRLRRHI) shows a compositional bias: basic residues. The segment at 1–25 (MSKLSRKQQTQKRHRRLRRHITGTS) is disordered.

Belongs to the universal ribosomal protein uL18 family. As to quaternary structure, part of the 50S ribosomal subunit; part of the 5S rRNA/L5/L18/L25 subcomplex. Contacts the 5S and 23S rRNAs.

Its function is as follows. This is one of the proteins that bind and probably mediate the attachment of the 5S RNA into the large ribosomal subunit, where it forms part of the central protuberance. In Synechococcus sp. (strain CC9902), this protein is Large ribosomal subunit protein uL18.